The primary structure comprises 220 residues: Sec-independent protein translocase protein TatB (220 aa).

Residues 1–21 (MFDIGFSELLLVLVIGLVVLG) traverse the membrane as a helical segment. The disordered stretch occupies residues 192-220 (KQQIDTIDSHGTDLSSAGPSRIHQPGGDQ).

It belongs to the TatB family. In terms of assembly, the Tat system comprises two distinct complexes: a TatABC complex, containing multiple copies of TatA, TatB and TatC subunits, and a separate TatA complex, containing only TatA subunits. Substrates initially bind to the TatABC complex, which probably triggers association of the separate TatA complex to form the active translocon.

The protein resides in the cell inner membrane. Its function is as follows. Part of the twin-arginine translocation (Tat) system that transports large folded proteins containing a characteristic twin-arginine motif in their signal peptide across membranes. Together with TatC, TatB is part of a receptor directly interacting with Tat signal peptides. TatB may form an oligomeric binding site that transiently accommodates folded Tat precursor proteins before their translocation. This chain is Sec-independent protein translocase protein TatB, found in Yersinia pestis bv. Antiqua (strain Antiqua).